A 73-amino-acid polypeptide reads, in one-letter code: Translation initiation factor IF-1 (73 aa).

Positions 1–73 (MDIKEEAIET…TKGRIVYREK (73 aa)) constitute an S1-like domain.

This sequence belongs to the IF-1 family. In terms of assembly, component of the 30S ribosomal translation pre-initiation complex which assembles on the 30S ribosome in the order IF-2 and IF-3, IF-1 and N-formylmethionyl-tRNA(fMet); mRNA recruitment can occur at any time during PIC assembly.

It is found in the cytoplasm. Its function is as follows. One of the essential components for the initiation of protein synthesis. Stabilizes the binding of IF-2 and IF-3 on the 30S subunit to which N-formylmethionyl-tRNA(fMet) subsequently binds. Helps modulate mRNA selection, yielding the 30S pre-initiation complex (PIC). Upon addition of the 50S ribosomal subunit IF-1, IF-2 and IF-3 are released leaving the mature 70S translation initiation complex. The chain is Translation initiation factor IF-1 from Borreliella afzelii (strain PKo) (Borrelia afzelii).